Consider the following 638-residue polypeptide: Signal recognition particle receptor subunit alpha (638 aa).

Disordered regions lie at residues 132-244 and 283-316; these read APTT…GKKA and GTGS…TKGT. Basic and acidic residues-rich tracts occupy residues 137–146 and 153–165; these read KKFEDSEKAK and IETR…EKAK. Ser177 carries the phosphoserine modification. The span at 204–239 shows a compositional bias: basic and acidic residues; the sequence is LSKEELIRRKREEFIQKHGRGMEKSNKSTKSDAPKE. Thr284 carries the phosphothreonine modification. Ser296, Ser297, and Ser298 each carry phosphoserine. Polar residues predominate over residues 304–314; sequence AQNSTKPSATK. An NG domain region spans residues 419–636; sequence YVVTFCGVNG…NAKAVVAALM (218 aa). 425–432 contributes to the GTP binding site; the sequence is GVNGVGKS. Ser473 is subject to Phosphoserine. A GTP-binding site is contributed by 520–524; the sequence is DTAGR. Thr578 carries the post-translational modification Phosphothreonine. 588–591 contacts GTP; it reads TKFD.

The protein belongs to the GTP-binding SRP family. As to quaternary structure, heterodimer with SRPRB. Interacts with the signal recognition particle (SRP) complex subunit SRP54. (Microbial infection) May interact with Zika virus strain Mr-766 non-structural protein 4A/NS4A. May interact with Zika virus French Polynesia 10087PF/2013 non-structural protein 4A/NS4A. In terms of assembly, (Microbial infection) May interact with Dengue virus DENV2 16681 non-structural protein 4A/NS4A.

It localises to the endoplasmic reticulum membrane. Its function is as follows. Component of the signal recognition particle (SRP) complex receptor (SR). Ensures, in conjunction with the SRP complex, the correct targeting of the nascent secretory proteins to the endoplasmic reticulum membrane system. Forms a guanosine 5'-triphosphate (GTP)-dependent complex with the SRP subunit SRP54. SRP receptor compaction and GTPase rearrangement drive SRP-mediated cotranslational protein translocation into the ER. The polypeptide is Signal recognition particle receptor subunit alpha (Homo sapiens (Human)).